A 430-amino-acid polypeptide reads, in one-letter code: Tol-Pal system protein TolB (430 aa).

An N-terminal signal peptide occupies residues 1–21; that stretch reads MKQALRVAFGFLMLWAAVLHA.

This sequence belongs to the TolB family. In terms of assembly, the Tol-Pal system is composed of five core proteins: the inner membrane proteins TolA, TolQ and TolR, the periplasmic protein TolB and the outer membrane protein Pal. They form a network linking the inner and outer membranes and the peptidoglycan layer.

Its subcellular location is the periplasm. Part of the Tol-Pal system, which plays a role in outer membrane invagination during cell division and is important for maintaining outer membrane integrity. TolB occupies a key intermediary position in the Tol-Pal system because it communicates directly with both membrane-embedded components, Pal in the outer membrane and TolA in the inner membrane. The protein is Tol-Pal system protein TolB of Salmonella enteritidis PT4 (strain P125109).